The primary structure comprises 172 residues: Peptide deformylase 1 (172 aa).

Fe cation-binding residues include Cys-91 and His-133. The active site involves Glu-134. Residue His-137 participates in Fe cation binding.

The protein belongs to the polypeptide deformylase family. Fe(2+) serves as cofactor.

It carries out the reaction N-terminal N-formyl-L-methionyl-[peptide] + H2O = N-terminal L-methionyl-[peptide] + formate. Its function is as follows. Removes the formyl group from the N-terminal Met of newly synthesized proteins. Requires at least a dipeptide for an efficient rate of reaction. N-terminal L-methionine is a prerequisite for activity but the enzyme has broad specificity at other positions. The protein is Peptide deformylase 1 of Vibrio parahaemolyticus serotype O3:K6 (strain RIMD 2210633).